Reading from the N-terminus, the 83-residue chain is UPF0297 protein Moth_1643 (83 aa).

Belongs to the UPF0297 family.

This chain is UPF0297 protein Moth_1643, found in Moorella thermoacetica (strain ATCC 39073 / JCM 9320).